The sequence spans 396 residues: Phosphoglycerate kinase (396 aa).

Residues 21–23 (DFN), R36, 59–62 (HLGR), R118, and R151 each bind substrate. ATP is bound by residues K201, G292, E323, and 349-352 (GGDS).

This sequence belongs to the phosphoglycerate kinase family. In terms of assembly, monomer.

It is found in the cytoplasm. It catalyses the reaction (2R)-3-phosphoglycerate + ATP = (2R)-3-phospho-glyceroyl phosphate + ADP. The protein operates within carbohydrate degradation; glycolysis; pyruvate from D-glyceraldehyde 3-phosphate: step 2/5. This chain is Phosphoglycerate kinase, found in Leptospira biflexa serovar Patoc (strain Patoc 1 / Ames).